Here is a 366-residue protein sequence, read N- to C-terminus: Chorismate synthase (366 aa).

Arginine 48 lines the NADP(+) pocket. Residues 125 to 127 (RSS), 238 to 239 (NA), glycine 278, 293 to 297 (KPTSS), and arginine 319 contribute to the FMN site.

The protein belongs to the chorismate synthase family. As to quaternary structure, homotetramer. FMNH2 serves as cofactor.

The enzyme catalyses 5-O-(1-carboxyvinyl)-3-phosphoshikimate = chorismate + phosphate. It functions in the pathway metabolic intermediate biosynthesis; chorismate biosynthesis; chorismate from D-erythrose 4-phosphate and phosphoenolpyruvate: step 7/7. Functionally, catalyzes the anti-1,4-elimination of the C-3 phosphate and the C-6 proR hydrogen from 5-enolpyruvylshikimate-3-phosphate (EPSP) to yield chorismate, which is the branch point compound that serves as the starting substrate for the three terminal pathways of aromatic amino acid biosynthesis. This reaction introduces a second double bond into the aromatic ring system. The chain is Chorismate synthase from Alkalilimnicola ehrlichii (strain ATCC BAA-1101 / DSM 17681 / MLHE-1).